The following is a 78-amino-acid chain: U7-lycotoxin-Ls1e (78 aa).

The N-terminal stretch at 1–22 (MKLIIFTGLALLLIVSLIDVEA) is a signal peptide. The propeptide occupies 23 to 26 (QNEG).

This sequence belongs to the neurotoxin 19 (CSTX) family. 07 (U7-Lctx) subfamily. Contains 4 disulfide bonds. As to expression, expressed by the venom gland.

The protein localises to the secreted. The protein is U7-lycotoxin-Ls1e of Lycosa singoriensis (Wolf spider).